We begin with the raw amino-acid sequence, 302 residues long: N-acetylmuramic acid 6-phosphate etherase (302 aa).

In terms of domain architecture, SIS spans 58 to 221 (IGKAFLNGGR…STGAMVKTGK (164 aa)). Glutamate 86 (proton donor) is an active-site residue. Glutamate 117 is a catalytic residue.

The protein belongs to the GCKR-like family. MurNAc-6-P etherase subfamily. As to quaternary structure, homodimer.

It catalyses the reaction N-acetyl-D-muramate 6-phosphate + H2O = N-acetyl-D-glucosamine 6-phosphate + (R)-lactate. It participates in amino-sugar metabolism; N-acetylmuramate degradation. Its function is as follows. Specifically catalyzes the cleavage of the D-lactyl ether substituent of MurNAc 6-phosphate, producing GlcNAc 6-phosphate and D-lactate. In Clostridium botulinum (strain Loch Maree / Type A3), this protein is N-acetylmuramic acid 6-phosphate etherase.